We begin with the raw amino-acid sequence, 595 residues long: Potassium-transporting ATPase potassium-binding subunit (595 aa).

10 helical membrane-spanning segments follow: residues 9–29 (ICGY…YMAA), 63–83 (TGYA…VYAL), 135–155 (GLTV…VALI), 177–197 (ILHI…GQGV), 285–305 (FLEM…FGVM), 312–332 (GWVI…VTVL), 412–432 (GLYG…LMIG), 451–471 (AIVI…AVML), 516–536 (LMLG…VLAI), and 560–580 (FVGL…IPAL).

The protein belongs to the KdpA family. As to quaternary structure, the system is composed of three essential subunits: KdpA, KdpB and KdpC.

The protein localises to the cell inner membrane. Part of the high-affinity ATP-driven potassium transport (or Kdp) system, which catalyzes the hydrolysis of ATP coupled with the electrogenic transport of potassium into the cytoplasm. This subunit binds the periplasmic potassium ions and delivers the ions to the membrane domain of KdpB through an intramembrane tunnel. This chain is Potassium-transporting ATPase potassium-binding subunit, found in Methylococcus capsulatus (strain ATCC 33009 / NCIMB 11132 / Bath).